The primary structure comprises 408 residues: tRNA pseudouridine synthase D (408 aa).

Asp76 serves as the catalytic Nucleophile. One can recognise a TRUD domain in the interval Gly149 to Leu362.

This sequence belongs to the pseudouridine synthase TruD family.

It carries out the reaction uridine(13) in tRNA = pseudouridine(13) in tRNA. Responsible for synthesis of pseudouridine from uracil-13 in transfer RNAs. This chain is tRNA pseudouridine synthase D, found in Leptospira interrogans serogroup Icterohaemorrhagiae serovar Lai (strain 56601).